A 63-amino-acid polypeptide reads, in one-letter code: DNA-directed RNA polymerase 7 kDa subunit (63 aa).

This sequence belongs to the poxviridae DNA-directed RNA polymerase 7 kDa subunit family. As to quaternary structure, the DNA-dependent RNA polymerase (vRNAP) consists of eight subunits encoded by early viral genes and termed according to their apparent molecular masses Rpo147, Rpo132, Rpo35, Rpo30, Rpo22, Rpo19, Rpo18, and Rpo7. The same holoenzyme, with the addition of the transcription-specificity factor RAP94, is used for early gene expression.

The protein localises to the virion. It carries out the reaction RNA(n) + a ribonucleoside 5'-triphosphate = RNA(n+1) + diphosphate. Functionally, part of the DNA-dependent RNA polymerase which catalyzes the transcription of viral DNA into RNA using the four ribonucleoside triphosphates as substrates. Responsible for the transcription of early, intermediate and late genes. DNA-dependent RNA polymerase associates with the early transcription factor (ETF), itself composed of OPG118 and OPG134, thereby allowing the early genes transcription. Late transcription, and probably also intermediate transcription, require newly synthesized RNA polymerase. This chain is DNA-directed RNA polymerase 7 kDa subunit (OPG090), found in Homo sapiens (Human).